The following is a 359-amino-acid chain: Transcription factor MYB115 (359 aa).

Over residues 1–17 the composition is skewed to polar residues; it reads MYHQNLISSTPNQNSNP. The segment at 1–21 is disordered; it reads MYHQNLISSTPNQNSNPHDWD. HTH myb-type domains are found at residues 153–208 and 209–259; these read KDII…RPNI and KKND…RRLH. DNA-binding regions (H-T-H motif) lie at residues 181 to 204 and 232 to 255; these read WTSIAKMFQGRVGKQCRERWHNHL and WTEIAKRLPGRSENIVKNHWNATK.

As to expression, accumulates in reproductive organs (e.g. flowers and siliques). Expressed at very low levels in vegetative organs.

The protein resides in the nucleus. Functionally, transcription activator that recognizes the motif 5'-TAACGG-3' in the promoter of target genes. Promotes vegetative-to-embryonic transition and the formation of somatic embryos from root explants in a WUS-independent manner. Together with MYB118, activates the transcription of S-ACP-DES2/AAD2 and S-ACP-DES3/AAD3 thus promoting the biosynthesis of omega-7 monounsaturated fatty acid in seed endosperm. This is Transcription factor MYB115 from Arabidopsis thaliana (Mouse-ear cress).